We begin with the raw amino-acid sequence, 717 residues long: Envelope glycoprotein H (717 aa).

A signal peptide spans 1–18; sequence MTILQLFLVFLNILEALC. Residues 19–693 are Virion surface-facing; the sequence is DYQLPKPRIN…AYRARLVNFI (675 aa). N-linked (GlcNAc...) asparagine; by host glycans are attached at residues N43, N59, N80, and N128. The interaction with gL stretch occupies residues 177 to 239; that stretch reads TPAYPTISCH…SNDVFSLVIF (63 aa). N444, N560, N613, and N675 each carry an N-linked (GlcNAc...) asparagine; by host glycan. The helical transmembrane segment at 694-714 threads the bilayer; the sequence is IVIMVFILFLVGLYLLYKLFV. Over 715–717 the chain is Intravirion; that stretch reads YLT.

It belongs to the herpesviridae glycoprotein H family. In terms of assembly, interacts with glycoprotein L (gL); this interaction is necessary for the correct processing and cell surface expression of gH. The heterodimer gH/gL seems to interact with gB trimers during fusion. In terms of processing, N-glycosylated, O-glycosylated, and sialylated.

It is found in the virion membrane. The protein resides in the host cell membrane. It localises to the host endosome membrane. The heterodimer glycoprotein H-glycoprotein L is required for the fusion of viral and plasma membranes leading to virus entry into the host cell. Following initial binding to host receptor, membrane fusion is mediated by the fusion machinery composed of gB and the heterodimer gH/gL. May also be involved in the fusion between the virion envelope and the outer nuclear membrane during virion morphogenesis. This is Envelope glycoprotein H from Saimiriine herpesvirus 2 (strain 11) (SaHV-2).